The following is a 135-amino-acid chain: Flagellar assembly factor FliW 2 (135 aa).

The protein belongs to the FliW family. As to quaternary structure, interacts with translational regulator CsrA and flagellin(s).

Its subcellular location is the cytoplasm. Functionally, acts as an anti-CsrA protein, binds CsrA and prevents it from repressing translation of its target genes, one of which is flagellin. Binds to flagellin and participates in the assembly of the flagellum. This chain is Flagellar assembly factor FliW 2, found in Helicobacter acinonychis (strain Sheeba).